The chain runs to 265 residues: Phosphate import ATP-binding protein PstB 2 (265 aa).

An ABC transporter domain is found at 13 to 260; that stretch reads FRTENLNVYY…PTKQATRDYV (248 aa). ATP is bound at residue 45-52; it reads GPSGCGKS.

It belongs to the ABC transporter superfamily. Phosphate importer (TC 3.A.1.7) family. In terms of assembly, the complex is composed of two ATP-binding proteins (PstB), two transmembrane proteins (PstC and PstA) and a solute-binding protein (PstS).

It localises to the cell inner membrane. The catalysed reaction is phosphate(out) + ATP + H2O = ADP + 2 phosphate(in) + H(+). Its function is as follows. Part of the ABC transporter complex PstSACB involved in phosphate import. Responsible for energy coupling to the transport system. The protein is Phosphate import ATP-binding protein PstB 2 of Synechococcus sp. (strain JA-3-3Ab) (Cyanobacteria bacterium Yellowstone A-Prime).